Reading from the N-terminus, the 590-residue chain is Histone-binding protein N1/N2 (590 aa).

A disordered region spans residues 1–30; sequence MAEETAALSTEKTEDTSTAPSTSAEKADGI. Residues 36–69 form a TPR 1 repeat; it reads AKRLMGAGQKHLVMKDVRSAVNLFQEASSLLAKQ. Residues 102–328 form a disordered region; sequence ALEGMPEDDE…EKETEEEDVG (227 aa). The segment covering 106–120 has biased composition (acidic residues); sequence MPEDDEEEAEKEEDP. Composition is skewed to basic and acidic residues over residues 128–250 and 262–275; these read LDEK…DAKE and AEEKMDSEASESKE. Residues 293 to 327 are compositionally biased toward acidic residues; sequence EKMEEEEEGEDSEENEDGTEENEGTEEKETEEEDV. TPR repeat units follow at residues 357–390 and 399–432; these read AQAHQKLGEVCIESENYSQAVEDFLACLNIQKEH and AETHYHLGLAYQYSSKHEEAISHFTQSIGVIEKR. The interval 492-590 is disordered; the sequence is GGSSGFSKEN…METATVESTA (99 aa). A compositionally biased stretch (polar residues) spans 496–525; the sequence is GFSKENGSTSSSSAVEKSGDSTVPVTNCVS. Residues 531-537 carry the Nuclear localization signal motif; sequence VRKKRKT. A compositionally biased stretch (basic and acidic residues) spans 536–553; sequence KTEEESPLKDKDAKKSKQ.

It belongs to the NASP family.

It is found in the nucleus. In terms of biological role, this protein is involved in nucleosome assembly. It is bound to H3 and H4 in the absence of DNA, but released from H3 and H4 in the presence of DNA. The protein is Histone-binding protein N1/N2 of Xenopus laevis (African clawed frog).